A 425-amino-acid chain; its full sequence is MSTIIDIHAREILDSRGNPTVEVDVTLESGAFGRAAVPSGASTGAHEAVEKRDGDTSRYMGKGVLEAVAAVNGEIAEMLVGFDATDQVGIDRTMIEMDGTPNKGRLGANAILGVSLAVAKAAAEFTNQPLFRYVGGASARVLPVPMMNIINGGEHADNPIDIQEFMIMPVAAKNVRDAIRMGSEVFHTLKKELAAGGFNTGIGDEGGFAPNISSTRQALDYILRSIEKAGYKPGEDIYLALDCASTEYFKGGKYEMKGEGKSLTSAENVDYLAALCADYPIISIEDGCAEDDWDGWKLLTDRLGAKVQLVGDDLFVTNPKRLEQGIKAGVGNSMLVKVNQIGSLTETLMAVDMAHRARYTNVMSHRSGETEDSTIADLAVATNCGQIKTGSLSRSDRLAKYNQLIRIEEMLGEVAEYAGRSILKG.

(2R)-2-phosphoglycerate is bound at residue Gln163. Glu205 acts as the Proton donor in catalysis. The Mg(2+) site is built by Asp242, Glu285, and Asp312. Lys337, Arg366, Ser367, and Lys388 together coordinate (2R)-2-phosphoglycerate. The active-site Proton acceptor is Lys337.

This sequence belongs to the enolase family. Requires Mg(2+) as cofactor.

Its subcellular location is the cytoplasm. It localises to the secreted. It is found in the cell surface. It carries out the reaction (2R)-2-phosphoglycerate = phosphoenolpyruvate + H2O. It participates in carbohydrate degradation; glycolysis; pyruvate from D-glyceraldehyde 3-phosphate: step 4/5. Its function is as follows. Catalyzes the reversible conversion of 2-phosphoglycerate (2-PG) into phosphoenolpyruvate (PEP). It is essential for the degradation of carbohydrates via glycolysis. The sequence is that of Enolase from Cereibacter sphaeroides (strain ATCC 17025 / ATH 2.4.3) (Rhodobacter sphaeroides).